A 281-amino-acid polypeptide reads, in one-letter code: 4-hydroxy-3-methylbut-2-enyl diphosphate reductase (281 aa).

Position 12 (C12) interacts with [4Fe-4S] cluster. (2E)-4-hydroxy-3-methylbut-2-enyl diphosphate contacts are provided by H41 and H74. H41 and H74 together coordinate dimethylallyl diphosphate. Positions 41 and 74 each coordinate isopentenyl diphosphate. Residue C96 coordinates [4Fe-4S] cluster. H124 serves as a coordination point for (2E)-4-hydroxy-3-methylbut-2-enyl diphosphate. H124 is a binding site for dimethylallyl diphosphate. Residue H124 participates in isopentenyl diphosphate binding. The active-site Proton donor is E126. Residue T164 coordinates (2E)-4-hydroxy-3-methylbut-2-enyl diphosphate. A [4Fe-4S] cluster-binding site is contributed by C193. The (2E)-4-hydroxy-3-methylbut-2-enyl diphosphate site is built by S221, N223, and S265. The dimethylallyl diphosphate site is built by S221, N223, and S265. Isopentenyl diphosphate is bound by residues S221, N223, and S265.

Belongs to the IspH family. Requires [4Fe-4S] cluster as cofactor.

It carries out the reaction isopentenyl diphosphate + 2 oxidized [2Fe-2S]-[ferredoxin] + H2O = (2E)-4-hydroxy-3-methylbut-2-enyl diphosphate + 2 reduced [2Fe-2S]-[ferredoxin] + 2 H(+). The catalysed reaction is dimethylallyl diphosphate + 2 oxidized [2Fe-2S]-[ferredoxin] + H2O = (2E)-4-hydroxy-3-methylbut-2-enyl diphosphate + 2 reduced [2Fe-2S]-[ferredoxin] + 2 H(+). It participates in isoprenoid biosynthesis; dimethylallyl diphosphate biosynthesis; dimethylallyl diphosphate from (2E)-4-hydroxy-3-methylbutenyl diphosphate: step 1/1. The protein operates within isoprenoid biosynthesis; isopentenyl diphosphate biosynthesis via DXP pathway; isopentenyl diphosphate from 1-deoxy-D-xylulose 5-phosphate: step 6/6. Catalyzes the conversion of 1-hydroxy-2-methyl-2-(E)-butenyl 4-diphosphate (HMBPP) into a mixture of isopentenyl diphosphate (IPP) and dimethylallyl diphosphate (DMAPP). Acts in the terminal step of the DOXP/MEP pathway for isoprenoid precursor biosynthesis. This Nitratidesulfovibrio vulgaris (strain DSM 19637 / Miyazaki F) (Desulfovibrio vulgaris) protein is 4-hydroxy-3-methylbut-2-enyl diphosphate reductase.